The sequence spans 347 residues: Homeobox protein knotted-1-like 9 (347 aa).

Residues 1 to 17 (MESFASLAGGGSSSTTA) are compositionally biased toward low complexity. Disordered regions lie at residues 1–36 (MESF…PPPL), 122–145 (QQLD…DVPD), and 179–206 (DSNC…DPSD). Positions 22-36 (LIPPENPDRISPPPL) are enriched in pro residues. The span at 188-203 (SEEEQDTSCPEAEEID) shows a compositional bias: acidic residues. Residues 208–228 (QLKHQLLMKYGGSLGDLRQAF) enclose the ELK domain. Positions 229-293 (SKRTKKGKLP…NQRKRHWKPT (65 aa)) form a DNA-binding region, homeobox; TALE-type.

Belongs to the TALE/KNOX homeobox family.

The protein resides in the nucleus. This is Homeobox protein knotted-1-like 9 from Oryza sativa subsp. japonica (Rice).